Reading from the N-terminus, the 135-residue chain is Protein NrdI (135 aa).

It belongs to the NrdI family.

Functionally, probably involved in ribonucleotide reductase function. The protein is Protein NrdI of Pectobacterium atrosepticum (strain SCRI 1043 / ATCC BAA-672) (Erwinia carotovora subsp. atroseptica).